The following is a 309-amino-acid chain: Olfactory receptor 5B2 (309 aa).

Over 1–23 (MENCTEVTKFILLGLTSVPELQI) the chain is Extracellular. N-linked (GlcNAc...) asparagine glycosylation occurs at Asn-3. Residues 24-47 (PLFILFTFIYLLTLCGNLGMMLLI) traverse the membrane as a helical segment. Residues 48 to 55 (LMDSCLHT) are Cytoplasmic-facing. A helical membrane pass occupies residues 56 to 77 (PMYFFLSNLSLVDFGYSSAVTP). At 78-98 (KVMAGFLRGDKVISYNACAVQ) the chain is on the extracellular side. Residues Cys-95 and Cys-187 are joined by a disulfide bond. The chain crosses the membrane as a helical span at residues 99-118 (MFFFVALATVENYLLASMAY). Over 119 to 137 (DRYAAVCKPLHYTTTMTAS) the chain is Cytoplasmic. The chain crosses the membrane as a helical span at residues 138-156 (VGACLALGSYVCGFLNASF). Residues 157-193 (HIGGIFSLSFCKSNLVHHFFCDVPAVMALSCSDKHTS) are Extracellular-facing. Residues 194–217 (EVILVFMSSFNIFFVLLVIFISYL) form a helical membrane-spanning segment. The Cytoplasmic portion of the chain corresponds to 218–234 (FIFITILKMHSAKGHQK). A helical transmembrane segment spans residues 235–257 (ALSTCASHFTAVSVFYGTVIFIY). Residues 258–270 (LQPSSSHSMDTDK) are Extracellular-facing. The chain crosses the membrane as a helical span at residues 271-290 (MASVFYAMIIPMLNPVVYSL). Over 291 to 309 (RNREVQNAFKKVLRRQKFL) the chain is Cytoplasmic.

Belongs to the G-protein coupled receptor 1 family.

It localises to the cell membrane. Functionally, odorant receptor. The polypeptide is Olfactory receptor 5B2 (OR5B2) (Homo sapiens (Human)).